We begin with the raw amino-acid sequence, 138 residues long: Protein transport protein got1 homolog (138 aa).

Over 1–7 (MFTDQQK) the chain is Cytoplasmic. Residues 8–28 (IGAMLSAMGLFFGFLGVLLFL) traverse the membrane as a helical segment. Topologically, residues 29–30 (DR) are lumenal. Residues 31-51 (NLLALGNLLLVSGIVLILGLQ) form a helical membrane-spanning segment. Over 52 to 62 (KTTKFFAQKKK) the chain is Cytoplasmic. A helical transmembrane segment spans residues 63–82 (IKGTILFFFGIVVLLVTRWT). The Lumenal segment spans residues 83 to 87 (FVGMV). Residues 88–108 (IEIFGFVNLFGDAFPIVISIL) form a helical membrane-spanning segment. Over 109 to 138 (RKLPIIGNILNHPLVNRLLQKADSGNELPF) the chain is Cytoplasmic.

The protein belongs to the GOT1 family.

The protein resides in the golgi apparatus membrane. In terms of biological role, may be involved in fusion of ER-derived transport vesicles with the Golgi complex. This chain is Protein transport protein got1 homolog (golt1), found in Dictyostelium discoideum (Social amoeba).